A 1007-amino-acid chain; its full sequence is Beta-galactosidase (1007 aa).

The tract at residues 29-48 (TIPPHSDHESFQSQEELEEG) is disordered. The active-site Proton donor is the Glu465. Glu532 (nucleophile) is an active-site residue.

It belongs to the glycosyl hydrolase 2 family. As to quaternary structure, monomer.

The catalysed reaction is Hydrolysis of terminal non-reducing beta-D-galactose residues in beta-D-galactosides.. This is Beta-galactosidase (lacZ) from Lactobacillus delbrueckii subsp. bulgaricus.